The chain runs to 312 residues: Gamma-soluble NSF attachment protein (312 aa).

Residues 281–312 are disordered; that stretch reads KKKSPATPQAKPDGVTATAADEEEDEYSGGLC. A Phosphoserine modification is found at S284. The residue at position 287 (T287) is a Phosphothreonine. The span at 300–312 shows a compositional bias: acidic residues; sequence ADEEEDEYSGGLC. S308 bears the Phosphoserine mark.

This sequence belongs to the SNAP family. Interacts with RAB11FIP5. Interacts with VTI1A.

It localises to the membrane. The protein resides in the golgi apparatus. In terms of biological role, required for vesicular transport between the endoplasmic reticulum and the Golgi apparatus. The sequence is that of Gamma-soluble NSF attachment protein from Homo sapiens (Human).